The chain runs to 528 residues: D-3-phosphoglycerate dehydrogenase (528 aa).

NAD(+)-binding positions include 151-152 (RI), D171, 230-232 (AAR), and D256. The active site involves R232. E261 is a catalytic residue. The active-site Proton donor is the H279. 279–282 (HLGA) serves as a coordination point for NAD(+). Residues 455–528 (NLVIRYVDQP…ANKLEVVNLS (74 aa)) enclose the ACT domain.

The protein belongs to the D-isomer specific 2-hydroxyacid dehydrogenase family.

The enzyme catalyses (2R)-3-phosphoglycerate + NAD(+) = 3-phosphooxypyruvate + NADH + H(+). It carries out the reaction (R)-2-hydroxyglutarate + NAD(+) = 2-oxoglutarate + NADH + H(+). The protein operates within amino-acid biosynthesis; L-serine biosynthesis; L-serine from 3-phospho-D-glycerate: step 1/3. Functionally, catalyzes the reversible oxidation of 3-phospho-D-glycerate to 3-phosphonooxypyruvate, the first step of the phosphorylated L-serine biosynthesis pathway. Also catalyzes the reversible oxidation of 2-hydroxyglutarate to 2-oxoglutarate. The protein is D-3-phosphoglycerate dehydrogenase (serA) of Mycobacterium leprae (strain TN).